The primary structure comprises 91 residues: Lipolysis-activating peptide 1-alpha chain (91 aa).

A signal peptide spans 1–22 (MMKLVLFGIIVILFSLIGSIHG). In terms of domain architecture, LCN-type CS-alpha/beta spans 24–87 (SGNYPLNPYG…VWNAVKKHCK (64 aa)). Cystine bridges form between cysteine 38/cysteine 61, cysteine 47/cysteine 66, and cysteine 51/cysteine 68.

The protein belongs to the long (3 C-C) scorpion toxin superfamily. Monomer (edited version) and heterodimer (non-edited version) of this alpha chain and a beta chain (AC P84809). As to expression, expressed by the venom gland.

It localises to the secreted. Its function is as follows. The heterodimer non-edited LVP1 induces lipolysis in rat adipocytes. Induction of lipolysis by LVP1 appears to be mediated through the beta-2 adrenergic receptor pathway (ADRB2). Intracerebroventricular injection is not toxic to mice. In terms of biological role, the edited BmKBTx-like, similar to beta-toxins, may modulate voltage-gated sodium channels (Nav) and may block voltage-gated potassium channels (Kv). The sequence is that of Lipolysis-activating peptide 1-alpha chain from Buthus occitanus tunetanus (Common European scorpion).